The sequence spans 605 residues: Protein Spindly (605 aa).

Residue Met1 is modified to N-acetylmethionine. Positions 2–442 form a coiled coil; the sequence is EADIITNLRC…ELKLKYEPEE (441 aa). Phosphoserine occurs at positions 513, 515, and 555. The tract at residues 544–580 is disordered; it reads ALSERSGNTPNSPRLAAESKLQTEVKEGKETSSKLEK. Positions 564 to 580 are enriched in basic and acidic residues; it reads LQTEVKEGKETSSKLEK.

The protein belongs to the Spindly family. As to quaternary structure, interacts with KNTC1 and ZW10. These interactions appear weak and may be transient or indirect. Interacts with dynein intermediate chain and dynactin (DCTN1). Interacts with the catalytically active form of USP45. Post-translationally, monoubiquitinated with'Lys-48' linkage. Deubiquitinated by USP45.

It is found in the cytoplasm. The protein localises to the cytoskeleton. Its subcellular location is the microtubule organizing center. The protein resides in the centrosome. It localises to the chromosome. It is found in the centromere. The protein localises to the kinetochore. Its subcellular location is the nucleus. The protein resides in the spindle pole. Functionally, required for the localization of dynein and dynactin to the mitotic kintochore. Dynein is believed to control the initial lateral interaction between the kinetochore and spindle microtubules and to facilitate the subsequent formation of end-on kinetochore-microtubule attachments mediated by the NDC80 complex. Also required for correct spindle orientation. Does not appear to be required for the removal of spindle assembly checkpoint (SAC) proteins from the kinetochore upon bipolar spindle attachment. Acts as an adapter protein linking the dynein motor complex to various cargos and converts dynein from a non-processive to a highly processive motor in the presence of dynactin. Facilitates the interaction between dynein and dynactin and activates dynein processivity (the ability to move along a microtubule for a long distance without falling off the track). Plays a role in cell migration. This Homo sapiens (Human) protein is Protein Spindly.